Consider the following 628-residue polypeptide: Kinesin-like protein tea2 (628 aa).

The tract at residues 2-122 is interaction with mal3; that stretch reads SSSSSKPVNT…TTSQQTNSKG (121 aa). Ser-82 is modified (phosphoserine). The Kinesin motor domain occupies 132–460; it reads GIITSIRIRP…LKFASRAQNL (329 aa). Residue 218-225 participates in ATP binding; sequence GMTGTGKT. The stretch at 530–557 forms a coiled coil; it reads LRMEELLSDHNFEIADLRDELQDKEQII. The disordered stretch occupies residues 588 to 628; it reads VTRGSRSSSDQFSNETKTEILPDDQQQSKKDSVTQETQLLS. Residues 589–602 show a composition bias toward polar residues; that stretch reads TRGSRSSSDQFSNE. Basic and acidic residues predominate over residues 603 to 620; sequence TKTEILPDDQQQSKKDSV.

It belongs to the TRAFAC class myosin-kinesin ATPase superfamily. Kinesin family. In terms of assembly, interacts with mal3 and tip1.

Its subcellular location is the cytoplasm. The protein resides in the cytoskeleton. Its function is as follows. Promotes microtubule growth, possibly through interactions with the microtubule end, and is important for establishing and maintaining polarized growth along the long axis of the cell. Acts as a kinesin motor protein that moves along microtubules and is required for proper localization of tea1 and tip1 to the cell tips and microtubules, respectively. ATPase activity stimulated via interaction with mal3. This chain is Kinesin-like protein tea2, found in Schizosaccharomyces pombe (strain 972 / ATCC 24843) (Fission yeast).